A 309-amino-acid polypeptide reads, in one-letter code: NAD kinase (309 aa).

Catalysis depends on Asp89, which acts as the Proton acceptor. NAD(+)-binding positions include 89–90 (DG), 163–164 (NE), His174, Arg191, Asp193, and 204–209 (TAYALS).

Belongs to the NAD kinase family. It depends on a divalent metal cation as a cofactor.

It is found in the cytoplasm. The catalysed reaction is NAD(+) + ATP = ADP + NADP(+) + H(+). In terms of biological role, involved in the regulation of the intracellular balance of NAD and NADP, and is a key enzyme in the biosynthesis of NADP. Catalyzes specifically the phosphorylation on 2'-hydroxyl of the adenosine moiety of NAD to yield NADP. This Shewanella sp. (strain ANA-3) protein is NAD kinase.